The primary structure comprises 777 residues: Subtilisin-like protease SBT1.4 (777 aa).

Positions 1–25 (MAKLSLSSIFFVFPLLLCFFSPSSS) are cleaved as a signal peptide. The propeptide at 26 to 110 (SSDGLESYIV…VIPDQAREIH (85 aa)) is activation peptide. One can recognise an Inhibitor I9 domain in the interval 32–110 (SYIVHVQRSH…VIPDQAREIH (79 aa)). The Peptidase S8 domain maps to 115–614 (PAFLGFSQNS…AGHVDPNKAL (500 aa)). Aspartate 142 serves as the catalytic Charge relay system. Residue asparagine 198 is glycosylated (N-linked (GlcNAc...) asparagine). The tract at residues 199-223 (GTKKHAAKESRSPRDTEGHGTHTAS) is disordered. Over residues 205–218 (AKESRSPRDTEGHG) the composition is skewed to basic and acidic residues. Residue histidine 217 is the Charge relay system of the active site. Asparagine 232 and asparagine 395 each carry an N-linked (GlcNAc...) asparagine glycan. A PA domain is found at 376–461 (LSLVYSGDCG…VGAKAGDQIR (86 aa)). The active-site Charge relay system is the serine 546.

This sequence belongs to the peptidase S8 family.

It localises to the secreted. The sequence is that of Subtilisin-like protease SBT1.4 from Arabidopsis thaliana (Mouse-ear cress).